A 69-amino-acid chain; its full sequence is Guanine nucleotide-binding protein subunit gamma (69 aa).

The residue at position 2 (Ser2) is an N-acetylserine. Cys66 bears the Cysteine methyl ester mark. Cys66 is lipidated: S-geranylgeranyl cysteine. Positions 67-69 (SVL) are cleaved as a propeptide — removed in mature form.

The protein belongs to the G protein gamma family. As to quaternary structure, g proteins are composed of 3 units, alpha, beta and gamma. Interacts with gpbA, and this requires phlp1. Post-translationally, this protein is thought to be subject to lipidation, and this requires phlp1.

It is found in the cell membrane. Its function is as follows. Guanine nucleotide-binding proteins (G proteins) are involved as a modulator or transducer in various transmembrane signaling systems. This major G-protein of the squid photoreceptor is involved in visual transduction. The beta and gamma chains are required for the GTPase activity, for replacement of GDP by GTP, and for G protein-effector interaction. Required for normal chemotaxis in response to cAMP. This is Guanine nucleotide-binding protein subunit gamma (gpgA) from Dictyostelium discoideum (Social amoeba).